A 25-amino-acid polypeptide reads, in one-letter code: Snaclec bothroalternin subunit alpha/beta (25 aa).

The region spanning 1–25 (DCPSDWSNHEGHCYRVFNEWMNWAD) is the C-type lectin domain. A disulfide bridge connects residues C2 and C13.

The protein belongs to the snaclec family. Heterodimer of subunits alpha and beta; disulfide-linked. In terms of tissue distribution, expressed by the venom gland.

Its subcellular location is the secreted. Functionally, thrombin (F2) inhibitor that inhibits aggregation of rabbit platelets induced by alpha-thrombin. The sequence is that of Snaclec bothroalternin subunit alpha/beta from Bothrops alternatus (Urutu).